A 612-amino-acid polypeptide reads, in one-letter code: Dihydroxy-acid dehydratase (612 aa).

Aspartate 81 is a binding site for Mg(2+). Cysteine 122 lines the [2Fe-2S] cluster pocket. Positions 123 and 124 each coordinate Mg(2+). An N6-carboxylysine modification is found at lysine 124. [2Fe-2S] cluster is bound at residue cysteine 193. Glutamate 489 is a binding site for Mg(2+). Residue serine 515 is the Proton acceptor of the active site.

This sequence belongs to the IlvD/Edd family. As to quaternary structure, homodimer. It depends on [2Fe-2S] cluster as a cofactor. Requires Mg(2+) as cofactor.

It catalyses the reaction (2R)-2,3-dihydroxy-3-methylbutanoate = 3-methyl-2-oxobutanoate + H2O. The catalysed reaction is (2R,3R)-2,3-dihydroxy-3-methylpentanoate = (S)-3-methyl-2-oxopentanoate + H2O. It participates in amino-acid biosynthesis; L-isoleucine biosynthesis; L-isoleucine from 2-oxobutanoate: step 3/4. It functions in the pathway amino-acid biosynthesis; L-valine biosynthesis; L-valine from pyruvate: step 3/4. Its function is as follows. Functions in the biosynthesis of branched-chain amino acids. Catalyzes the dehydration of (2R,3R)-2,3-dihydroxy-3-methylpentanoate (2,3-dihydroxy-3-methylvalerate) into 2-oxo-3-methylpentanoate (2-oxo-3-methylvalerate) and of (2R)-2,3-dihydroxy-3-methylbutanoate (2,3-dihydroxyisovalerate) into 2-oxo-3-methylbutanoate (2-oxoisovalerate), the penultimate precursor to L-isoleucine and L-valine, respectively. The sequence is that of Dihydroxy-acid dehydratase from Stenotrophomonas maltophilia (strain R551-3).